Consider the following 338-residue polypeptide: Anthranilate phosphoribosyltransferase (338 aa).

Residues Gly-81, Gly-84–Asp-85, Thr-89, Asn-91–Thr-94, Lys-109–Ser-117, and Ser-121 each bind 5-phospho-alpha-D-ribose 1-diphosphate. Gly-81 is a binding site for anthranilate. Ser-93 contributes to the Mg(2+) binding site. Asn-112 contacts anthranilate. Arg-167 is a binding site for anthranilate. Residues Asp-226 and Glu-227 each contribute to the Mg(2+) site.

This sequence belongs to the anthranilate phosphoribosyltransferase family. As to quaternary structure, homodimer. Mg(2+) is required as a cofactor.

It catalyses the reaction N-(5-phospho-beta-D-ribosyl)anthranilate + diphosphate = 5-phospho-alpha-D-ribose 1-diphosphate + anthranilate. Its pathway is amino-acid biosynthesis; L-tryptophan biosynthesis; L-tryptophan from chorismate: step 2/5. In terms of biological role, catalyzes the transfer of the phosphoribosyl group of 5-phosphorylribose-1-pyrophosphate (PRPP) to anthranilate to yield N-(5'-phosphoribosyl)-anthranilate (PRA). The chain is Anthranilate phosphoribosyltransferase from Acidithiobacillus ferrooxidans (strain ATCC 23270 / DSM 14882 / CIP 104768 / NCIMB 8455) (Ferrobacillus ferrooxidans (strain ATCC 23270)).